We begin with the raw amino-acid sequence, 454 residues long: Protein translocase subunit SecY (454 aa).

The next 10 helical transmembrane spans lie at 43–63 (LTIALLVFIIKIGMAIPLPYI), 97–117 (FTLGITPSINASIILQLAFVI), 144–164 (TLLLAITQSVFLIFSLRAFIF), 168–188 (ILKLFELSCVLSSGAMIILWI), 201–221 (SSFLIFLNIVSVLPEQIGMSF), 226–246 (IFSFEGLIVILTFSITVWAAI), 289–309 (PVVFASYLIPILKTGGIYILL), 334–354 (IVEAGLICLFALFYSGLIIDP), 390–410 (LIGALILAFNVVLLNLVGFVF), and 414–434 (IFKGFSIGSQIILLGVVTEIL).

It belongs to the SecY/SEC61-alpha family. Component of the plastid Sec protein translocase complex, which is composed of at least SecY and SecE.

The protein resides in the plastid. It localises to the chloroplast thylakoid membrane. In terms of biological role, the central subunit of the protein translocation channel SecYE. Consists of two halves formed by TMs 1-5 and 6-10. These two domains form a lateral gate at the front which open onto the bilayer between TMs 2 and 7, and are clamped together by SecE at the back. The channel is closed by both a pore ring composed of hydrophobic SecY resides and a short helix (helix 2A) on the extracellular side of the membrane which forms a plug. The chain is Protein translocase subunit SecY from Heterosigma akashiwo (strain NIES-293 / 8280G21-1).